The primary structure comprises 434 residues: Cyclic 2,3-diphosphoglycerate synthetase (434 aa).

It belongs to the cyclic 2,3-diphosphoglycerate synthetase family.

The protein resides in the cytoplasm. It catalyses the reaction (2R)-2,3-bisphosphoglycerate + ATP + H(+) = cyclic (2R)-2,3-bisphosphoglycerate + ADP + phosphate. Functionally, catalyzes the formation of cyclic 2,3-diphosphoglycerate (cDPG) by formation of an intramolecular phosphoanhydride bond at the expense of ATP. The sequence is that of Cyclic 2,3-diphosphoglycerate synthetase from Thermococcus sibiricus (strain DSM 12597 / MM 739).